The chain runs to 470 residues: Na(+)-translocating NADH-quinone reductase subunit A (470 aa).

The protein belongs to the NqrA family. As to quaternary structure, composed of six subunits; NqrA, NqrB, NqrC, NqrD, NqrE and NqrF.

The enzyme catalyses a ubiquinone + n Na(+)(in) + NADH + H(+) = a ubiquinol + n Na(+)(out) + NAD(+). In terms of biological role, NQR complex catalyzes the reduction of ubiquinone-1 to ubiquinol by two successive reactions, coupled with the transport of Na(+) ions from the cytoplasm to the periplasm. NqrA to NqrE are probably involved in the second step, the conversion of ubisemiquinone to ubiquinol. The sequence is that of Na(+)-translocating NADH-quinone reductase subunit A from Chlamydia caviae (strain ATCC VR-813 / DSM 19441 / 03DC25 / GPIC) (Chlamydophila caviae).